The following is a 401-amino-acid chain: Protein-glutamate methylesterase/protein-glutamine glutaminase (401 aa).

In terms of domain architecture, Response regulatory spans R16–D134. Residue D67 is modified to 4-aspartylphosphate. The disordered stretch occupies residues P146–T208. Composition is skewed to low complexity over residues A166 to I176 and S185 to P199. Positions P205–G400 constitute a CheB-type methylesterase domain. Catalysis depends on residues S219, H246, and D342.

Belongs to the CheB family. Phosphorylated by CheA. Phosphorylation of the N-terminal regulatory domain activates the methylesterase activity.

It localises to the cytoplasm. The enzyme catalyses [protein]-L-glutamate 5-O-methyl ester + H2O = L-glutamyl-[protein] + methanol + H(+). It carries out the reaction L-glutaminyl-[protein] + H2O = L-glutamyl-[protein] + NH4(+). In terms of biological role, involved in chemotaxis. Part of a chemotaxis signal transduction system that modulates chemotaxis in response to various stimuli. Catalyzes the demethylation of specific methylglutamate residues introduced into the chemoreceptors (methyl-accepting chemotaxis proteins or MCP) by CheR. Also mediates the irreversible deamidation of specific glutamine residues to glutamic acid. In Maricaulis maris (strain MCS10) (Caulobacter maris), this protein is Protein-glutamate methylesterase/protein-glutamine glutaminase.